The following is a 459-amino-acid chain: Cysteine--tRNA ligase (459 aa).

Residue C28 participates in Zn(2+) binding. Residues 30–40 (VTIYDLCHIGH) carry the 'HIGH' region motif. 3 residues coordinate Zn(2+): C209, H234, and E238. The 'KMSKS' region motif lies at 266–270 (KMSKS). K269 lines the ATP pocket.

This sequence belongs to the class-I aminoacyl-tRNA synthetase family. Monomer. It depends on Zn(2+) as a cofactor.

It is found in the cytoplasm. The catalysed reaction is tRNA(Cys) + L-cysteine + ATP = L-cysteinyl-tRNA(Cys) + AMP + diphosphate. In Shewanella baltica (strain OS185), this protein is Cysteine--tRNA ligase.